The chain runs to 120 residues: Cell division protein FtsL (120 aa).

The Cytoplasmic portion of the chain corresponds to 1-36 (MSNLAVKYKQQAQEEVQIQTPPQQMVQPKAKAKITR). The chain crosses the membrane as a helical span at residues 37 to 57 (IEKLLYVAFIGFLLYACVAFI). Topologically, residues 58–120 (GNKAGLYQVN…INANNVKGLK (63 aa)) are extracellular.

Belongs to the FtsL family.

The protein localises to the cell membrane. Its function is as follows. Essential cell division protein. This chain is Cell division protein FtsL, found in Bacillus anthracis.